Reading from the N-terminus, the 292-residue chain is Large ribosomal subunit protein uL18 (292 aa).

It belongs to the universal ribosomal protein uL18 family. As to quaternary structure, component of the large ribosomal subunit (LSU).

Its subcellular location is the cytoplasm. It localises to the nucleus. Component of the ribosome, a large ribonucleoprotein complex responsible for the synthesis of proteins in the cell. The small ribosomal subunit (SSU) binds messenger RNAs (mRNAs) and translates the encoded message by selecting cognate aminoacyl-transfer RNA (tRNA) molecules. The large subunit (LSU) contains the ribosomal catalytic site termed the peptidyl transferase center (PTC), which catalyzes the formation of peptide bonds, thereby polymerizing the amino acids delivered by tRNAs into a polypeptide chain. The nascent polypeptides leave the ribosome through a tunnel in the LSU and interact with protein factors that function in enzymatic processing, targeting, and the membrane insertion of nascent chains at the exit of the ribosomal tunnel. The polypeptide is Large ribosomal subunit protein uL18 (rpl5) (Dictyostelium discoideum (Social amoeba)).